The following is a 294-amino-acid chain: Dolichol-phosphate mannosyltransferase (294 aa).

Residues 1–27 form a disordered region; the sequence is MSIALDMDASAKMRKQPGSSGWSTSST. The Cytoplasmic portion of the chain corresponds to 1-263; the sequence is MSIALDMDAS…QQLVELYRFR (263 aa). Residues 17–27 are compositionally biased toward low complexity; it reads PGSSGWSTSST. Positions 35, 39, 70, 72, 123, 124, 125, 127, 151, 211, 237, and 243 each coordinate GDP-alpha-D-mannose. The Mg(2+) site is built by aspartate 125 and glutamine 127. Mn(2+)-binding residues include aspartate 125 and glutamine 127. The chain crosses the membrane as a helical span at residues 264–284; the sequence is FGTVPIVFVLIVLLVLALYIW. Residues 285 to 294 are Lumenal-facing; sequence SHVLAPMLGA.

It belongs to the glycosyltransferase 2 family. Mg(2+) is required as a cofactor. It depends on Mn(2+) as a cofactor. The cofactor is Ca(2+).

The protein resides in the endoplasmic reticulum membrane. It catalyses the reaction a di-trans,poly-cis-dolichyl phosphate + GDP-alpha-D-mannose = a di-trans,poly-cis-dolichyl beta-D-mannosyl phosphate + GDP. It participates in protein modification; protein glycosylation. Its function is as follows. Transfers mannose from GDP-mannose to dolichol monophosphate to form dolichol phosphate mannose (Dol-P-Man) which is the mannosyl donor in pathways leading to N-glycosylation, glycosyl phosphatidylinositol membrane anchoring, and O-mannosylation of proteins. The protein is Dolichol-phosphate mannosyltransferase (DPM1) of Mycosarcoma maydis (Corn smut fungus).